A 539-amino-acid chain; its full sequence is F-box/WD-40 repeat-containing protein At5g21040 (539 aa).

An F-box domain is found at 65-111 (STTIIDLPQALISEILNCLDPKELGLVSCVSTYLHRLASEHHAWKEF). WD repeat units follow at residues 160-199 (GHTE…SIAA), 201-239 (KPLG…RNLF), 255-292 (GHEG…CVKT), 294-330 (RHSD…PLAI), 334-373 (AHEG…SETS), 382-419 (PHTS…KTNR), and 433-477 (PPQR…EIER). Residues 505–539 (GRPDQCSIAAHKNPINGERNRAWHSKRRASGKAKA) form a disordered region. Residues 526-539 (AWHSKRRASGKAKA) are compositionally biased toward basic residues.

The chain is F-box/WD-40 repeat-containing protein At5g21040 from Arabidopsis thaliana (Mouse-ear cress).